Here is a 148-residue protein sequence, read N- to C-terminus: Lysozyme C-1 (148 aa).

An N-terminal signal peptide occupies residues 1-18 (MKALLTLGLLLLSVTAQA). The 130-residue stretch at 19–148 (KVYNRCELAR…LSQYIRNCGV (130 aa)) folds into the C-type lysozyme domain. Disulfide bonds link Cys-24–Cys-146, Cys-48–Cys-134, Cys-83–Cys-99, and Cys-95–Cys-113. Catalysis depends on residues Glu-53 and Asp-71.

It belongs to the glycosyl hydrolase 22 family. In terms of assembly, monomer. In terms of tissue distribution, expressed strongly only in small intestine.

The protein localises to the secreted. It catalyses the reaction Hydrolysis of (1-&gt;4)-beta-linkages between N-acetylmuramic acid and N-acetyl-D-glucosamine residues in a peptidoglycan and between N-acetyl-D-glucosamine residues in chitodextrins.. In terms of biological role, lysozymes have primarily a bacteriolytic function; those in tissues and body fluids are associated with the monocyte-macrophage system and enhance the activity of immunoagents. Lyz1 is active against a range of Gram-positive and Gram-negative bacteria. Less effective than Lyz2 in killing Gram-negative bacteria. Lyz1 and Lyz2 are equally effective in killing Gram-positive bacteria. The polypeptide is Lysozyme C-1 (Lyz1) (Mus musculus (Mouse)).